The following is a 298-amino-acid chain: MLVLSIRIKVWQTMESEITKRIVVPELEDILYKEHKVLDKGFVRLVDYMGSDESVVQAARISYGRGTKSVSQDAALINYLMRHSHTTPFEMCEIKFHIKLPIFVARQWVRHRTANVNEYSARYSVLDHEFYIPELDHVATQSEDNAQGRGNSLSNEDAQYVTDLLKRDSDMVYETYNKFLIKGVSREISRISLTLNYYTEWYWKIDLHNLLHFLRLRSDVHAQYEIRVYAETMLEIVKKWVPLTYAAFVEYCLESQSFSKSALSVVKKLIAGEDVAREDTGIGKREWRELMDVLADNK.

Residues 41–251 (GFVRLVDYMG…PLTYAAFVEY (211 aa)) form the ThyX domain. FAD is bound by residues threonine 87, 110 to 112 (RHR), and glutamate 118. Residues 107 to 110 (QWVR), 118 to 122 (EYSAR), and arginine 190 each bind dUMP. Positions 110–120 (RHRTANVNEYS) match the ThyX motif motif. FAD contacts are provided by residues 206–208 (DLH) and histidine 212. A dUMP-binding site is contributed by arginine 217. The active-site Involved in ionization of N3 of dUMP, leading to its activation is arginine 217.

This sequence belongs to the thymidylate synthase ThyX family. Homotetramer. Requires FAD as cofactor.

It catalyses the reaction dUMP + (6R)-5,10-methylene-5,6,7,8-tetrahydrofolate + NADPH + H(+) = dTMP + (6S)-5,6,7,8-tetrahydrofolate + NADP(+). It participates in pyrimidine metabolism; dTTP biosynthesis. Functionally, catalyzes the reductive methylation of 2'-deoxyuridine-5'-monophosphate (dUMP) to 2'-deoxythymidine-5'-monophosphate (dTMP) while utilizing 5,10-methylenetetrahydrofolate (mTHF) as the methyl donor, and NADPH and FADH(2) as the reductant. The protein is Flavin-dependent thymidylate synthase of Ehrlichia ruminantium (strain Welgevonden).